Consider the following 313-residue polypeptide: Protein FixB (313 aa).

An FAD-binding site is contributed by 255-283 (LYLAVGISGQIQHMVGANASQTIFAINKD).

It belongs to the ETF alpha-subunit/FixB family. Heterodimer of FixA and FixB.

Its pathway is amine and polyamine metabolism; carnitine metabolism. In terms of biological role, required for anaerobic carnitine reduction. May bring reductant to CaiA. The polypeptide is Protein FixB (Shigella dysenteriae serotype 1 (strain Sd197)).